The following is a 361-amino-acid chain: Cyclin-D3-3 (361 aa).

This sequence belongs to the cyclin family. Cyclin D subfamily.

Functionally, promotes divisions in the guard cells (GCs) after the guard mother cells (GMC) symmetric division. The polypeptide is Cyclin-D3-3 (CYCD3-3) (Arabidopsis thaliana (Mouse-ear cress)).